Reading from the N-terminus, the 127-residue chain is MLQLLLAVFIGGGTGSVARWLLSMRFNPLHQAIPLGTLAANLIGAFIIGMGFAWFSRMTNIDPVWKVLITTGFCGGLTTFSTFSAEVVFLLQEGRFGWALLNVFVNLLGSFAMTALAFWLFSASTVH.

A run of 4 helical transmembrane segments spans residues 4 to 24 (LLLA…LLSM), 35 to 55 (LGTL…FAWF), 71 to 91 (TGFC…VFLL), and 103 to 123 (VFVN…LFSA). Residues glycine 75 and threonine 78 each contribute to the Na(+) site.

This sequence belongs to the fluoride channel Fluc/FEX (TC 1.A.43) family.

Its subcellular location is the cell inner membrane. It catalyses the reaction fluoride(in) = fluoride(out). Its activity is regulated as follows. Na(+) is not transported, but it plays an essential structural role and its presence is essential for fluoride channel function. Fluoride-specific ion channel. Important for reducing fluoride concentration in the cell, thus reducing its toxicity. This is Fluoride-specific ion channel FluC from Shigella flexneri serotype 5b (strain 8401).